A 294-amino-acid chain; its full sequence is Signal peptidase I (294 aa).

A disordered region spans residues Met-1–Pro-59. The Cytoplasmic segment spans residues Met-1–Arg-66. Residues Gly-47 to Pro-59 are compositionally biased toward basic and acidic residues. The chain crosses the membrane as a helical span at residues Glu-67 to Ala-87. The Extracellular segment spans residues Arg-88–Arg-294. Catalysis depends on residues Ser-96 and Lys-174.

This sequence belongs to the peptidase S26 family.

The protein localises to the cell membrane. The catalysed reaction is Cleavage of hydrophobic, N-terminal signal or leader sequences from secreted and periplasmic proteins.. The sequence is that of Signal peptidase I (lepB) from Mycobacterium tuberculosis (strain CDC 1551 / Oshkosh).